Here is a 131-residue protein sequence, read N- to C-terminus: Sperm microtubule inner protein 11 (131 aa).

The disordered stretch occupies residues 17–44; sequence SKKRDKTEETNQKDPVPTRLPPIFSEDG.

Microtubule inner protein component of sperm flagellar doublet microtubules. As to expression, expressed in sperm.

It is found in the cytoplasm. The protein resides in the cytoskeleton. It localises to the flagellum axoneme. Microtubule inner protein (MIP) part of the dynein-decorated doublet microtubules (DMTs) in flagellum axoneme. May serve to reinforce and thus stabilize the microtubule structure in the sperm flagella. This chain is Sperm microtubule inner protein 11 (SPMIP11), found in Bos taurus (Bovine).